Here is a 653-residue protein sequence, read N- to C-terminus: Macrolide export ATP-binding/permease protein MacB (653 aa).

An ABC transporter domain is found at 6–244 (LQLTRVTRRF…DAAPDASGGA (239 aa)). Position 42–49 (42–49 (GASGSGKS)) interacts with ATP. The next 4 membrane-spanning stretches (helical) occupy residues 278-298 (LLTM…VAIG), 526-546 (LTLL…IGVM), 587-607 (MGGA…SLFV), and 616-636 (AASI…FGFM).

Belongs to the ABC transporter superfamily. Macrolide exporter (TC 3.A.1.122) family. Homodimer.

Its subcellular location is the cell inner membrane. Its function is as follows. Non-canonical ABC transporter that contains transmembrane domains (TMD), which form a pore in the inner membrane, and an ATP-binding domain (NBD), which is responsible for energy generation. Confers resistance against macrolides. The protein is Macrolide export ATP-binding/permease protein MacB of Burkholderia pseudomallei (strain 1710b).